The primary structure comprises 1285 residues: DNA polymerase II large subunit (1285 aa).

The disordered stretch occupies residues 565–586; sequence TRIGGRMGRPGKSKPREMRPPP.

It belongs to the archaeal DNA polymerase II family. In terms of assembly, heterodimer of a large subunit and a small subunit. This protein undergoes a protein self splicing that involves a post-translational excision of the intervening region (intein) followed by peptide ligation.

It catalyses the reaction DNA(n) + a 2'-deoxyribonucleoside 5'-triphosphate = DNA(n+1) + diphosphate. It carries out the reaction Exonucleolytic cleavage in the 3'- to 5'-direction to yield nucleoside 5'-phosphates.. Functionally, possesses two activities: a DNA synthesis (polymerase) and an exonucleolytic activity that degrades single-stranded DNA in the 3'- to 5'-direction. Has a template-primer preference which is characteristic of a replicative DNA polymerase. This Methanoculleus marisnigri (strain ATCC 35101 / DSM 1498 / JR1) protein is DNA polymerase II large subunit.